Consider the following 395-residue polypeptide: Vibriobactin-specific isochorismate synthase (395 aa).

The protein belongs to the isochorismate synthase family.

The catalysed reaction is chorismate = isochorismate. It functions in the pathway siderophore biosynthesis; vibriobactin biosynthesis. The chain is Vibriobactin-specific isochorismate synthase (vibC) from Vibrio cholerae serotype O1 (strain ATCC 39315 / El Tor Inaba N16961).